Reading from the N-terminus, the 129-residue chain is ALK and LTK ligand 1 (129 aa).

A signal peptide spans 1-27 (MRPLKPGAPLPALFLLALALSPHGAHG). A disordered region spans residues 24-63 (GAHGRPRGRRGARVTDKEPKPLLFLPAAGAGRTPSGSRSA). Basic residues predominate over residues 25–35 (AHGRPRGRRGA). 2 disulfides stabilise this stretch: cysteine 90/cysteine 126 and cysteine 104/cysteine 113.

Belongs to the ALKAL family. Widely expressed with highest levels in thyroid and moderate levels in stomach, trachea, small intestine, prostate and brain.

The protein resides in the secreted. It localises to the cell membrane. Cytokine that acts as a physiological ligand for receptor tyrosine kinase LTK, leading to its activation. Monomeric ALKAL1 binds to LTK, leading to LTK homodimerization and activation. In contrast to ALKAL2, does not act as a potent physiological ligand for ALK. The polypeptide is ALK and LTK ligand 1 (Homo sapiens (Human)).